We begin with the raw amino-acid sequence, 309 residues long: Homoserine O-succinyltransferase (309 aa).

The active-site Acyl-thioester intermediate is Cys-142. 2 residues coordinate substrate: Lys-163 and Ser-192. His-235 serves as the catalytic Proton acceptor. Glu-237 is a catalytic residue. Residue Arg-249 participates in substrate binding.

Belongs to the MetA family.

It localises to the cytoplasm. It catalyses the reaction L-homoserine + succinyl-CoA = O-succinyl-L-homoserine + CoA. The protein operates within amino-acid biosynthesis; L-methionine biosynthesis via de novo pathway; O-succinyl-L-homoserine from L-homoserine: step 1/1. In terms of biological role, transfers a succinyl group from succinyl-CoA to L-homoserine, forming succinyl-L-homoserine. The polypeptide is Homoserine O-succinyltransferase (Photorhabdus laumondii subsp. laumondii (strain DSM 15139 / CIP 105565 / TT01) (Photorhabdus luminescens subsp. laumondii)).